The sequence spans 401 residues: MSESAFAERIVHNLLDTDFYKLTMMQGVLHNYPDADVEWEFRCRNGEDLRPYLGEIRNQLERLADLTLDDGQLAFLERISFLKPDFLRFLRLFRFNLRYVHVGIENDQLFLRLKGPWLHVILFEVPLLAIISEVRNRNLHPHMRLAEARDQLYRKFDWLRAHASDDELAELQVADFGTRRRFSSRVQEEVARVLRDDFPGRFVGTSNVDLAWKLDIKPLGTMAHEWIMAHQQLGPRLIDSQIAALDCWVREYRGLLGIALTDCITMDAFLGDFDLYFAKLFDGLRHDSGEPVAWAEKAIAHYQKLGIDPMTKTLVFSDGLNLTRSLEIFRALRGRINVSFGIGTNLTCDIPGVAPMNIVLKMTDCNGAPVAKISDEAAKTQCRDENFVAYMRHVFKVPSKE.

Histidine 224 bears the Phosphohistidine; by autocatalysis mark.

This sequence belongs to the NAPRTase family. Transiently phosphorylated on a His residue during the reaction cycle. Phosphorylation strongly increases the affinity for substrates and increases the rate of nicotinate D-ribonucleotide production. Dephosphorylation regenerates the low-affinity form of the enzyme, leading to product release.

It catalyses the reaction nicotinate + 5-phospho-alpha-D-ribose 1-diphosphate + ATP + H2O = nicotinate beta-D-ribonucleotide + ADP + phosphate + diphosphate. The protein operates within cofactor biosynthesis; NAD(+) biosynthesis; nicotinate D-ribonucleotide from nicotinate: step 1/1. Its function is as follows. Catalyzes the synthesis of beta-nicotinate D-ribonucleotide from nicotinate and 5-phospho-D-ribose 1-phosphate at the expense of ATP. This chain is Nicotinate phosphoribosyltransferase, found in Pseudomonas putida (strain ATCC 47054 / DSM 6125 / CFBP 8728 / NCIMB 11950 / KT2440).